We begin with the raw amino-acid sequence, 421 residues long: Forkhead box protein J1 (421 aa).

Disordered regions lie at residues 1-32 (MAESWLRLCGAGPGEEAGPEGGMEEPDALDDS) and 77-110 (ADPACLGQPHTPGKPTSSCTSRSAPPGLQAPPPD). The span at 11 to 21 (AGPGEEAGPEG) shows a compositional bias: gly residues. Residues 90–99 (KPTSSCTSRS) are compositionally biased toward polar residues. The segment at residues 120–210 (VKPPYSYATL…YAERLLSGAF (91 aa)) is a DNA-binding region (fork-head).

This sequence belongs to the FOXJ1 family. In terms of tissue distribution, predominantly expressed in tissues containing motile cilia.

The protein localises to the nucleus. Functionally, transcription factor specifically required for the formation of motile cilia. Acts by activating transcription of genes that mediate assembly of motile cilia, such as CFAP157. Binds the DNA consensus sequences 5'-HWDTGTTTGTTTA-3' or 5'-KTTTGTTGTTKTW-3' (where H is not G, W is A or T, D is not C, and K is G or T). Activates the transcription of a variety of ciliary proteins in the developing brain and lung. The chain is Forkhead box protein J1 from Mus musculus (Mouse).